Reading from the N-terminus, the 160-residue chain is Dihydrofolate reductase (160 aa).

The DHFR domain maps to 1-160 (MVKAIWAMDQ…KVAYYHKIAR (160 aa)). 5–7 (IWA) contacts substrate. NADP(+)-binding positions include 6 to 7 (WA) and 14 to 19 (IGNGNS). Positions 27 and 32 each coordinate substrate. 43–46 (GSAT) lines the NADP(+) pocket. A substrate-binding site is contributed by arginine 57. Residues 62-65 (LTRN) and 101-106 (CGGAQV) contribute to the NADP(+) site. Substrate is bound at residue serine 120.

The protein belongs to the dihydrofolate reductase family.

The catalysed reaction is (6S)-5,6,7,8-tetrahydrofolate + NADP(+) = 7,8-dihydrofolate + NADPH + H(+). Its pathway is cofactor biosynthesis; tetrahydrofolate biosynthesis; 5,6,7,8-tetrahydrofolate from 7,8-dihydrofolate: step 1/1. Key enzyme in folate metabolism. Catalyzes an essential reaction for de novo glycine and purine synthesis, and for DNA precursor synthesis. The chain is Dihydrofolate reductase (folA) from Mycoplasma pneumoniae (strain ATCC 29342 / M129 / Subtype 1) (Mycoplasmoides pneumoniae).